The primary structure comprises 101 residues: Small ribosomal subunit protein uS14 (101 aa).

Belongs to the universal ribosomal protein uS14 family. In terms of assembly, part of the 30S ribosomal subunit. Contacts proteins S3 and S10.

Its function is as follows. Binds 16S rRNA, required for the assembly of 30S particles and may also be responsible for determining the conformation of the 16S rRNA at the A site. The protein is Small ribosomal subunit protein uS14 of Nitrosomonas europaea (strain ATCC 19718 / CIP 103999 / KCTC 2705 / NBRC 14298).